The sequence spans 152 residues: UPF0266 membrane protein YobD (152 aa).

A run of 3 helical transmembrane segments spans residues 6–26, 45–65, and 67–87; these read LVLI…QFIM, VDSV…VTSH, and AQMT…IFWI.

It belongs to the UPF0266 family.

Its subcellular location is the cell inner membrane. The chain is UPF0266 membrane protein YobD from Salmonella agona (strain SL483).